The chain runs to 347 residues: Protein RecA (347 aa).

Residue 64-71 (GPESSGKT) participates in ATP binding.

This sequence belongs to the RecA family.

The protein localises to the cytoplasm. Its function is as follows. Can catalyze the hydrolysis of ATP in the presence of single-stranded DNA, the ATP-dependent uptake of single-stranded DNA by duplex DNA, and the ATP-dependent hybridization of homologous single-stranded DNAs. It interacts with LexA causing its activation and leading to its autocatalytic cleavage. The protein is Protein RecA of Bartonella bacilliformis (strain ATCC 35685 / KC583 / Herrer 020/F12,63).